The chain runs to 672 residues: Serine/threonine-protein kinase ppk16 (672 aa).

The Protein kinase domain maps to 31–279; that stretch reads YRIESVVGEG…IDQIISHPYF (249 aa). ATP is bound by residues 37-45 and lysine 60; that span reads VGEGSFGKV. Catalysis depends on aspartate 148, which acts as the Proton acceptor. Serine 231 carries the post-translational modification Phosphoserine. The segment covering 375 to 384 has biased composition (polar residues); sequence VSVMSNNQDS. 4 disordered regions span residues 375 to 396, 416 to 436, 464 to 572, and 632 to 672; these read VSVM…DSSN, DTLS…ENYL, NSFG…YSNV, and SGRK…TDLL. Polar residues predominate over residues 472-487; sequence NLPQTTHVDTGEQNTP. The segment covering 508-523 has biased composition (low complexity); it reads SNSQNSPSKSSNLSIN. Polar residues predominate over residues 531 to 541; sequence LQNTVISPQPT. Composition is skewed to low complexity over residues 549–572 and 639–649; these read RSLS…YSNV and SSSSLMFNQSS.

This sequence belongs to the protein kinase superfamily. Ser/Thr protein kinase family.

The protein resides in the cytoplasm. It catalyses the reaction L-seryl-[protein] + ATP = O-phospho-L-seryl-[protein] + ADP + H(+). It carries out the reaction L-threonyl-[protein] + ATP = O-phospho-L-threonyl-[protein] + ADP + H(+). Functionally, has a role in meiosis. This is Serine/threonine-protein kinase ppk16 (ppk16) from Schizosaccharomyces pombe (strain 972 / ATCC 24843) (Fission yeast).